Reading from the N-terminus, the 667-residue chain is Tripartite terminase subunit 3 (667 aa).

The short motif at 208-215 is the Walker A motif element; the sequence is VPRRHGKT. Residues 301-306 carry the Walker B motif motif; sequence LLIVDE. Catalysis depends on glutamate 306, which acts as the For ATPase activity. Catalysis depends on for nuclease activity residues aspartate 459, glutamate 530, and aspartate 644.

The protein belongs to the herpesviridae TRM3 protein family. As to quaternary structure, interacts with the terminase subunits TRM1 and TRM2. Interacts with portal protein.

The protein resides in the host nucleus. Component of the molecular motor that translocates viral genomic DNA in empty capsid during DNA packaging. Forms a tripartite terminase complex together with TRM1 and TRM2 in the host cytoplasm. Once the complex reaches the host nucleus, it interacts with the capsid portal vertex. This portal forms a ring in which genomic DNA is translocated into the capsid. TRM3 carries an RNase H-like nuclease activity that plays an important role for the cleavage of concatemeric viral DNA into unit length genomes. The chain is Tripartite terminase subunit 3 from Human herpesvirus 6A (strain Uganda-1102) (HHV-6 variant A).